The following is a 1648-amino-acid chain: Putative 1-phosphatidylinositol-3-phosphate 5-kinase FAB1C (1648 aa).

A compositionally biased stretch (basic and acidic residues) spans 97 to 106 (YDKVHPRDSP). 4 disordered regions span residues 97-116 (YDKV…ATES), 241-276 (QEDH…NDDA), 721-746 (SEIP…ENQL), and 1083-1139 (KTGD…GTSL). The span at 1084 to 1130 (TGDDNAPRNPEMHDPPKIDRRMQEGSDERDEQSHTDSEANGDNKDPE) shows a compositional bias: basic and acidic residues. In terms of domain architecture, PIPK spans 1316 to 1639 (NLNNRESEPS…RFRKAMTTYF (324 aa)).

As to quaternary structure, component of the PI(3,5)P2 regulatory complex at least composed of ATG18, SAC/FIG4, FAB1 and VAC14. Mg(2+) serves as cofactor. Mn(2+) is required as a cofactor.

It carries out the reaction a 1,2-diacyl-sn-glycero-3-phospho-(1D-myo-inositol-3-phosphate) + ATP = a 1,2-diacyl-sn-glycero-3-phospho-(1D-myo-inositol-3,5-bisphosphate) + ADP + H(+). Functionally, the PI(3,5)P2 regulatory complex regulates both the synthesis and turnover of phosphatidylinositol 3,5-bisphosphate (PtdIns(3,5)P2). Catalyzes the phosphorylation of phosphatidylinositol 3-phosphate on the fifth hydroxyl of the myo-inositol ring, to form phosphatidylinositol 3,5-bisphosphate. The protein is Putative 1-phosphatidylinositol-3-phosphate 5-kinase FAB1C (FAB1C) of Arabidopsis thaliana (Mouse-ear cress).